A 2542-amino-acid chain; its full sequence is Ankyrin repeat and KH domain-containing protein 1 (2542 aa).

Position 1 is an N-acetylmethionine (Met-1). The span at 1-10 (MLTDSGGGGT) shows a compositional bias: gly residues. Disordered regions lie at residues 1–44 (MLTD…IRTV) and 50–69 (AGPASGVGSSGGGGSGSGTG). The span at 20–29 (APRSAPAGAS) shows a compositional bias: low complexity. Gly residues predominate over residues 57 to 69 (GSSGGGGSGSGTG). 2 positions are modified to phosphoserine: Ser-101 and Ser-105. 15 ANK repeats span residues 204–233 (VDTRSLAEACSDGDVNAVRKLLDEGRSVNE), 237–266 (EGESLLCLACSAGYYELAQVLLAMHANVED), 271–300 (GDITPLMAASSGGYLDIVKLLLLHDADVNS), 304–333 (TGNTALTYACAGGFVDIVKVLLNEGANIED), 337–366 (NGHTPLMEAASAGHVEVARVLLDHGAGINT), 371–400 (FKESALTLACYKGHLDMVRFLLEAGADQEH), 404–433 (EMHTALMEACMDGHVEVARLLLDSGAQVNM), 437–466 (SFESPLTLAACGGHVELAALLIERGANLEE), 470–499 (EGYTPLMEAAREGHEEMVALLLAQGANINA), 504–533 (TQETALTLACCGGFSEVADFLIKAGADIEL), 534–563 (GCSTPLMEASQEGHLELVKYLLASGANVHA), 567–596 (TGDTALTYACENGHTDVADVLLQAGADLEH), 600–629 (GGRTPLMKAARAGHLCTVQFLISKGANVNR), 634–663 (NDHTVVSLACAGGHLAVVELLLAHGADPTH), and 667–696 (DGSTMLIEAAKGGHTNVVSYLLDYPNNVLS). The stretch at 775-852 (LECIVEETEG…RQLQMKTQQQ (78 aa)) forms a coiled coil. Phosphoserine is present on Ser-803. 10 ANK repeats span residues 1054–1083 (NHDTALTLACAGGHEELVSVLIARDAKIEH), 1087–1116 (KGFTPLILAATAGHVGVVEILLDKGGDIEA), 1121–1150 (TKDTPLSLACSGGRQEVVDLLLARGANKEH), 1154–1183 (SDYTPLSLAASGGYVNIIKILLNAGAEINS), 1189–1218 (LGISPLMLAAMNGHVPAVKLLLDMGSDINA), 1223–1252 (NRNTALTLACFQGRAEVVSLLLDRKANVEH), 1256–1285 (TGLTPLMEAASGGYAEVGRVLLDKGADVNA), 1291–1320 (SRDTALTIAADKGHYKFCELLIHRGAHIDV), 1324–1353 (KGNTPLWLASNGGHFDVVQLLVQAGADVDA), and 1357–1386 (RKITPLMSAFRKGHVKVVQYLVKEVNQFPS). A coiled-coil region spans residues 1415–1485 (KAKDQQAAEA…ENKPKENSEL (71 aa)). 3 disordered regions span residues 1441 to 1517 (REES…TIGI), 1534 to 1614 (NVVT…SQEL), and 1632 to 1664 (SQEEKTSTATSKTQTRLEGEVTPNSLSTSYKTV). Over residues 1453–1463 (REKRKEKRKKK) the composition is skewed to basic residues. The span at 1464-1483 (KEEQKRKQEEDEENKPKENS) shows a compositional bias: basic and acidic residues. The segment covering 1484–1502 (ELPEDEDEEENDEDVEQEV) has biased composition (acidic residues). The segment covering 1503 to 1517 (PIEPPSATTTTTIGI) has biased composition (low complexity). At Ser-1540 the chain carries Phosphoserine. Thr-1553 carries the post-translational modification Phosphothreonine. Over residues 1590-1603 (NSDSDNLDSTDCNS) the composition is skewed to low complexity. Positions 1604–1614 (ESSSGGKSQEL) are enriched in polar residues. Ser-1632 carries the phosphoserine modification. Positions 1638-1664 (STATSKTQTRLEGEVTPNSLSTSYKTV) are enriched in polar residues. Thr-1653 is modified (phosphothreonine). One can recognise a KH domain in the interval 1695-1759 (RRSKKLSVPA…ESTRYAVQLI (65 aa)). Disordered stretches follow at residues 1886 to 1923 (NTWGPFPVRPVNPGNTNSSPKHNNTSRLPNQNGTVLPS), 1987 to 2106 (PSVS…APLT), and 2260 to 2367 (NMHP…IPPP). Residues 1898–1922 (PGNTNSSPKHNNTSRLPNQNGTVLP) show a composition bias toward polar residues. Residues 1987–1996 (PSVSSAPITS) are compositionally biased toward low complexity. Polar residues predominate over residues 1997–2019 (GQAPTTFLPASTSQAQLSSQKME). The segment covering 2042 to 2077 (CTPSSTANSCSSSASNTPGAPETHPSSSPTPTSSNT) has biased composition (low complexity). Residues 2078 to 2106 (QEEAQPSSVSDLSPMSMPFASNSEPAPLT) show a composition bias toward polar residues. Composition is skewed to low complexity over residues 2285–2308 (LPSIDPSGSSPSSSSAPLASFSGI) and 2337–2349 (TSASNSSTSAPPT).

Belongs to the mask family. Interacts with PTPN11. Isoform 2 interacts with HIV-1 VPR. Interacts with NOD2. Ubiquitous with high expression in cervix, spleen and brain. Expressed in hematopoietic cells with increased expression in leukemia cells. Isoform 2 is highly expressed in spleen with almost no expression in muscle and brain.

It localises to the cytoplasm. Its function is as follows. May play a role as a scaffolding protein that may be associated with the abnormal phenotype of leukemia cells. Isoform 2 may possess an antiapoptotic effect and protect cells during normal cell survival through its regulation of caspases. The sequence is that of Ankyrin repeat and KH domain-containing protein 1 (ANKHD1) from Homo sapiens (Human).